The following is a 503-amino-acid chain: Lysine--tRNA ligase (503 aa).

Positions 414 and 421 each coordinate Mg(2+).

The protein belongs to the class-II aminoacyl-tRNA synthetase family. In terms of assembly, homodimer. The cofactor is Mg(2+).

It is found in the cytoplasm. It catalyses the reaction tRNA(Lys) + L-lysine + ATP = L-lysyl-tRNA(Lys) + AMP + diphosphate. This is Lysine--tRNA ligase from Neisseria gonorrhoeae (strain ATCC 700825 / FA 1090).